The primary structure comprises 495 residues: Membrane-bound glycerophospholipid O-acyltransferase 1 (495 aa).

Helical transmembrane passes span 34 to 54, 70 to 90, 126 to 146, 180 to 200, 238 to 258, and 297 to 317; these read VNFV…RIYL, IFGI…LFVL, IYIF…MIVT, PSFL…AGPC, TGAV…FLTL, and YFAW…FSGV. Residues asparagine 350 and histidine 381 contribute to the active site. 3 consecutive transmembrane segments (helical) span residues 371 to 391, 426 to 446, and 450 to 470; these read VLTF…YFTF, TWAV…MLAV, and ISLY…IILF. Serine 488 is subject to Phosphoserine.

This sequence belongs to the membrane-bound acyltransferase family. Expressed in neutrophils.

It localises to the endoplasmic reticulum membrane. It catalyses the reaction a 1-acyl-sn-glycero-3-phospho-L-serine + an acyl-CoA = a 1,2-diacyl-sn-glycero-3-phospho-L-serine + CoA. The enzyme catalyses a 1-acyl-sn-glycero-3-phosphocholine + an acyl-CoA = a 1,2-diacyl-sn-glycero-3-phosphocholine + CoA. The catalysed reaction is a 1-acyl-sn-glycero-3-phosphoethanolamine + an acyl-CoA = a 1,2-diacyl-sn-glycero-3-phosphoethanolamine + CoA. It carries out the reaction 1-(9Z-octadecenoyl)-sn-glycero-3-phospho-L-serine + (9Z)-octadecenoyl-CoA = 1,2-di-(9Z)-octadecenoyl-sn-glycero-3-phospho-L-serine + CoA. It catalyses the reaction 1-(9Z-octadecenoyl)-sn-glycero-3-phospho-L-serine + octadecanoyl-CoA = 1-(9Z-octadecenoyl)-2-octadecanoyl-sn-glycero-3-phospho-L-serine + CoA. The enzyme catalyses 1-(9Z-octadecenoyl)-sn-glycero-3-phospho-L-serine + (9Z)-hexadecenoyl-CoA = 1-(9Z-octadecenoyl)-2-(9Z-hexadecenoyl)-sn-glycero-3-phospho-L-serine + CoA. The catalysed reaction is 1-(9Z-octadecenoyl)-sn-glycero-3-phospho-L-serine + (9Z,12Z)-octadecadienoyl-CoA = 1-(9Z-octadecenoyl)-2-(9Z,12Z-octadienoyl)-sn-glycero-3-phospho-L-serine + CoA. It carries out the reaction 1-hexadecanoyl-sn-glycero-3-phosphocholine + (9Z)-octadecenoyl-CoA = 1-hexadecanoyl-2-(9Z-octadecenoyl)-sn-glycero-3-phosphocholine + CoA. It catalyses the reaction a 1-O-(1Z-alkenyl)-sn-glycero-3-phosphoethanolamine + (9Z)-octadecenoyl-CoA = 1-O-(1Z)-alkenyl-2-(9Z)-octadecenoyl-sn-glycero-3-phosphoethanolamine + CoA. The enzyme catalyses 1-octadecanoyl-sn-glycero-3-phosphoethanolamine + (9Z)-octadecenoyl-CoA = 1-octadecanoyl-2-(9Z-octadecenoyl)-sn-glycero-3-phosphoethanolamine + CoA. The catalysed reaction is 1-(9Z-octadecenoyl)-sn-glycero-3-phosphoethanolamine + (9Z)-octadecenoyl-CoA = 1,2-di-(9Z-octadecenoyl)-sn-glycero-3-phosphoethanolamine + CoA. It carries out the reaction 1-hexadecanoyl-sn-glycero-3-phosphoethanolamine + (9Z)-octadecenoyl-CoA = 1-hexadecanoyl-2-(9Z-octadecenoyl)-sn-glycero-3-phosphoethanolamine + CoA. It catalyses the reaction 1-(10Z-heptadecenoyl)-sn-glycero-3-phosphoethanolamine + hexadecanoyl-CoA = 1-(10Z-heptadecenoyl)-2-hexadecanoyl-sn-glycero-3-phosphoethanolamine + CoA. The enzyme catalyses 1-(10Z-heptadecenoyl)-sn-glycero-3-phosphoethanolamine + (9Z)-octadecenoyl-CoA = 1-(10Z-heptadecenoyl)-2-(9Z-octadecenoyl)-sn-glycero-3-phosphoethanolamine + CoA. It participates in lipid metabolism; phospholipid metabolism. Its activity is regulated as follows. Partially inhibited by thimerosal. In terms of biological role, acyltransferase which catalyzes the transfer of an acyl group from an acyl-CoA towards a lysophospholipid producing a phospholipid and participates in the reacylation step of the phospholipid remodeling pathway also known as the Lands cycle. Acts on lysophosphatidylserine (1-acyl-2-hydroxy-sn-glycero-3-phospho-L-serine or LPS) and lysophosphatidylethanolamine (1-acyl-sn-glycero-3-phosphoethanolamine or LPE), and to a lesser extend lysophosphatidylcholine. Prefers oleoyl-CoA as the acyl donor and 1-oleoyl-LPE as acceptor. May play a role in neurite outgrowth during neuronal differentiation. The chain is Membrane-bound glycerophospholipid O-acyltransferase 1 from Homo sapiens (Human).